The sequence spans 165 residues: Growth arrest and DNA damage-inducible protein GADD45 alpha (165 aa).

Position 2 is a phosphothreonine (Thr-2).

Belongs to the GADD45 family. As to quaternary structure, interacts with AURKA, PCNA, GADD45GIP1 and MAPK14.

The protein localises to the nucleus. In terms of biological role, might affect PCNA interaction with some CDK (cell division protein kinase) complexes; stimulates DNA excision repair in vitro and inhibits entry of cells into S phase. In T-cells, functions as a regulator of p38 MAPKs by inhibiting p88 phosphorylation and activity. This Bos taurus (Bovine) protein is Growth arrest and DNA damage-inducible protein GADD45 alpha (GADD45A).